A 627-amino-acid chain; its full sequence is 1-deoxy-D-xylulose-5-phosphate synthase (627 aa).

Residues His75 and 116-118 each bind thiamine diphosphate; that span reads AHS. Asp147 contacts Mg(2+). Residues 148–149, Asn177, Tyr284, and Glu366 each bind thiamine diphosphate; that span reads GA. Asn177 provides a ligand contact to Mg(2+).

The protein belongs to the transketolase family. DXPS subfamily. Homodimer. It depends on Mg(2+) as a cofactor. Requires thiamine diphosphate as cofactor.

The enzyme catalyses D-glyceraldehyde 3-phosphate + pyruvate + H(+) = 1-deoxy-D-xylulose 5-phosphate + CO2. It participates in metabolic intermediate biosynthesis; 1-deoxy-D-xylulose 5-phosphate biosynthesis; 1-deoxy-D-xylulose 5-phosphate from D-glyceraldehyde 3-phosphate and pyruvate: step 1/1. Its function is as follows. Catalyzes the acyloin condensation reaction between C atoms 2 and 3 of pyruvate and glyceraldehyde 3-phosphate to yield 1-deoxy-D-xylulose-5-phosphate (DXP). This is 1-deoxy-D-xylulose-5-phosphate synthase from Bordetella petrii (strain ATCC BAA-461 / DSM 12804 / CCUG 43448).